The primary structure comprises 555 residues: CTP synthase (555 aa).

The segment at 1-271 (MVKRGKKTKY…DDKLAELFNI (271 aa)) is amidoligase domain. A CTP-binding site is contributed by serine 19. Serine 19 is a binding site for UTP. ATP is bound by residues 20-25 (SLGKGL) and aspartate 77. Mg(2+)-binding residues include aspartate 77 and glutamate 145. CTP contacts are provided by residues 152–154 (DIE), 192–197 (KTKPTQ), and lysine 228. UTP is bound by residues 192–197 (KTKPTQ) and lysine 228. Residues 297-537 (RIGIVGKYVE…VKAALEHRDA (241 aa)) enclose the Glutamine amidotransferase type-1 domain. Position 358 (glycine 358) interacts with L-glutamine. Cysteine 385 serves as the catalytic Nucleophile; for glutamine hydrolysis. Residues 386–389 (LGLQ), glutamate 409, and arginine 466 each bind L-glutamine. Residues histidine 510 and glutamate 512 contribute to the active site. The tract at residues 535–555 (RDAQQRQPPAEVKKLAVGKNG) is disordered.

This sequence belongs to the CTP synthase family. Homotetramer.

The enzyme catalyses UTP + L-glutamine + ATP + H2O = CTP + L-glutamate + ADP + phosphate + 2 H(+). It catalyses the reaction L-glutamine + H2O = L-glutamate + NH4(+). The catalysed reaction is UTP + NH4(+) + ATP = CTP + ADP + phosphate + 2 H(+). The protein operates within pyrimidine metabolism; CTP biosynthesis via de novo pathway; CTP from UDP: step 2/2. With respect to regulation, allosterically activated by GTP, when glutamine is the substrate; GTP has no effect on the reaction when ammonia is the substrate. The allosteric effector GTP functions by stabilizing the protein conformation that binds the tetrahedral intermediate(s) formed during glutamine hydrolysis. Inhibited by the product CTP, via allosteric rather than competitive inhibition. In terms of biological role, catalyzes the ATP-dependent amination of UTP to CTP with either L-glutamine or ammonia as the source of nitrogen. Regulates intracellular CTP levels through interactions with the four ribonucleotide triphosphates. The sequence is that of CTP synthase from Anaeromyxobacter sp. (strain K).